The sequence spans 177 residues: Coatomer subunit zeta-1 (177 aa).

Methionine 1 carries the post-translational modification N-acetylmethionine.

It belongs to the adaptor complexes small subunit family. As to quaternary structure, oligomeric complex that consists of at least the alpha, beta, beta', gamma, delta, epsilon and zeta subunits.

Its subcellular location is the cytoplasm. It is found in the golgi apparatus membrane. The protein localises to the cytoplasmic vesicle. The protein resides in the COPI-coated vesicle membrane. Functionally, the coatomer is a cytosolic protein complex that binds to dilysine motifs and reversibly associates with Golgi non-clathrin-coated vesicles, which further mediate biosynthetic protein transport from the ER, via the Golgi up to the trans Golgi network. Coatomer complex is required for budding from Golgi membranes, and is essential for the retrograde Golgi-to-ER transport of dilysine-tagged proteins. The zeta subunit may be involved in regulating the coat assembly and, hence, the rate of biosynthetic protein transport due to its association-dissociation properties with the coatomer complex. This Bos taurus (Bovine) protein is Coatomer subunit zeta-1 (COPZ1).